A 228-amino-acid polypeptide reads, in one-letter code: L-ornithine N5-acetyltransferase NATA1 (228 aa).

The disordered stretch occupies residues 1–21 (MAPPTAAPEPNTVPETSPTGH). Positions 77–227 (VFLLEISPSP…DALQAIDKLN (151 aa)) constitute an N-acetyltransferase domain. Acetyl-CoA contacts are provided by residues 153–155 (IFM), 161–166 (RKGFGK), 192–195 (NVNA), and Y199.

The protein belongs to the acetyltransferase family.

Its function is as follows. Acetyltransferase that converts ornithine to N5-acetylornithine, which is likely used in plant defense. The chain is L-ornithine N5-acetyltransferase NATA1 (NATA1) from Arabidopsis thaliana (Mouse-ear cress).